The chain runs to 213 residues: Large ribosomal subunit protein uL3 (213 aa).

The protein belongs to the universal ribosomal protein uL3 family. In terms of assembly, part of the 50S ribosomal subunit. Forms a cluster with proteins L14 and L19.

In terms of biological role, one of the primary rRNA binding proteins, it binds directly near the 3'-end of the 23S rRNA, where it nucleates assembly of the 50S subunit. The protein is Large ribosomal subunit protein uL3 of Bifidobacterium adolescentis (strain ATCC 15703 / DSM 20083 / NCTC 11814 / E194a).